The chain runs to 207 residues: Redox-sensing transcriptional repressor Rex (207 aa).

Residues 17-56 (IYLRYLSYLQQVEVTTVSSQQMGKNLDVNPAQIRKDLAAF) constitute a DNA-binding region (H-T-H motif). 91–96 (GAGHLG) is a binding site for NAD(+).

It belongs to the transcriptional regulatory Rex family. In terms of assembly, homodimer.

It localises to the cytoplasm. Functionally, modulates transcription in response to changes in cellular NADH/NAD(+) redox state. This is Redox-sensing transcriptional repressor Rex from Brevibacillus brevis (strain 47 / JCM 6285 / NBRC 100599).